A 604-amino-acid chain; its full sequence is FAD-linked oxidoreductase easE (604 aa).

The first 25 residues, 1-25, serve as a signal peptide directing secretion; sequence MQFLLWSTGLVALLSWLIYTQETQS. Residues N47, N70, N106, and N196 are each glycosylated (N-linked (GlcNAc...) asparagine). In terms of domain architecture, FAD-binding PCMH-type spans 125–308; sequence QGRIPLFTVG…TRATMRVFPD (184 aa).

It belongs to the oxygen-dependent FAD-linked oxidoreductase family. FAD serves as cofactor.

Its pathway is alkaloid biosynthesis; ergot alkaloid biosynthesis. Functionally, FAD-linked oxidoreductase; part of the gene cluster that mediates the biosynthesis of fungal ergot alkaloid. DmaW catalyzes the first step of ergot alkaloid biosynthesis by condensing dimethylallyl diphosphate (DMAP) and tryptophan to form 4-dimethylallyl-L-tryptophan. The second step is catalyzed by the methyltransferase easF that methylates 4-dimethylallyl-L-tryptophan in the presence of S-adenosyl-L-methionine, resulting in the formation of 4-dimethylallyl-L-abrine. The catalase easC and the FAD-dependent oxidoreductase easE then transform 4-dimethylallyl-L-abrine to chanoclavine-I which is further oxidized by easD in the presence of NAD(+), resulting in the formation of chanoclavine-I aldehyde. Chanoclavine-I aldehyde is the precursor of ergoamides and ergopeptines in Clavicipitaceae, and clavine-type alcaloids such as fumiclavine in Trichocomaceae. However, the metabolites downstream of chanoclavine-I aldehyde in Arthrodermataceae have not been identified yet. This Trichophyton verrucosum (strain HKI 0517) protein is FAD-linked oxidoreductase easE.